A 430-amino-acid chain; its full sequence is Enolase (430 aa).

Q163 provides a ligand contact to (2R)-2-phosphoglycerate. Residue E205 is the Proton donor of the active site. D242, E285, and D312 together coordinate Mg(2+). Residues K337, R366, S367, and K388 each coordinate (2R)-2-phosphoglycerate. The active-site Proton acceptor is the K337.

This sequence belongs to the enolase family. It depends on Mg(2+) as a cofactor.

Its subcellular location is the cytoplasm. It is found in the secreted. It localises to the cell surface. It carries out the reaction (2R)-2-phosphoglycerate = phosphoenolpyruvate + H2O. It participates in carbohydrate degradation; glycolysis; pyruvate from D-glyceraldehyde 3-phosphate: step 4/5. In terms of biological role, catalyzes the reversible conversion of 2-phosphoglycerate (2-PG) into phosphoenolpyruvate (PEP). It is essential for the degradation of carbohydrates via glycolysis. The sequence is that of Enolase from Rubrobacter xylanophilus (strain DSM 9941 / JCM 11954 / NBRC 16129 / PRD-1).